The following is a 68-amino-acid chain: UPF0435 protein SAOUHSC_02093 (68 aa).

Belongs to the UPF0435 family.

In Staphylococcus aureus (strain NCTC 8325 / PS 47), this protein is UPF0435 protein SAOUHSC_02093.